The chain runs to 320 residues: Nuclease (320 aa).

The active-site Proton acceptor is the H155. N187 contributes to the Mg(2+) binding site. N204 carries N-linked (GlcNAc...) asparagine glycosylation. An intrachain disulfide couples C312 to C317.

This sequence belongs to the DNA/RNA non-specific endonuclease family. As to quaternary structure, homodimer; as a result of non-covalent interactions and not through the disulfide linkages between the two monomers. It depends on Mg(2+) as a cofactor. Requires Mn(2+) as cofactor. In terms of processing, glycosylated.

The protein localises to the secreted. Functionally, this enzyme has both RNase and DNase activity. This is Nuclease from Syncephalastrum racemosum (Filamentous fungus).